We begin with the raw amino-acid sequence, 507 residues long: Cystathionine beta-synthase (507 aa).

An N6-(pyridoxal phosphate)lysine modification is found at K53. N84 serves as a coordination point for pyridoxal 5'-phosphate. Residue S134 is modified to Phosphoserine. Pyridoxal 5'-phosphate-binding positions include 196 to 200 (GTGGT) and S289. 2 positions are modified to phosphoserine: S350 and S424. The CBS domain maps to 373-432 (HLKPVVSVKETAKVTDVIKILKDNGFDQLPVLTEDGKLSGLVTLSELLRKLSINNSNNDN).

The protein belongs to the cysteine synthase/cystathionine beta-synthase family. It depends on pyridoxal 5'-phosphate as a cofactor.

The enzyme catalyses L-homocysteine + L-serine = L,L-cystathionine + H2O. Its pathway is amino-acid biosynthesis; L-cysteine biosynthesis; L-cysteine from L-homocysteine and L-serine: step 1/2. The sequence is that of Cystathionine beta-synthase (CYS4) from Saccharomyces cerevisiae (strain ATCC 204508 / S288c) (Baker's yeast).